The chain runs to 446 residues: Phosphoglucosamine mutase (446 aa).

Ser99 serves as the catalytic Phosphoserine intermediate. Ser99, Asp242, Asp244, and Asp246 together coordinate Mg(2+). Ser99 is subject to Phosphoserine.

This sequence belongs to the phosphohexose mutase family. It depends on Mg(2+) as a cofactor. Post-translationally, activated by phosphorylation.

The enzyme catalyses alpha-D-glucosamine 1-phosphate = D-glucosamine 6-phosphate. Functionally, catalyzes the conversion of glucosamine-6-phosphate to glucosamine-1-phosphate. This is Phosphoglucosamine mutase from Wolinella succinogenes (strain ATCC 29543 / DSM 1740 / CCUG 13145 / JCM 31913 / LMG 7466 / NCTC 11488 / FDC 602W) (Vibrio succinogenes).